Here is an 826-residue protein sequence, read N- to C-terminus: Ribosome-releasing factor 2, mitochondrial (826 aa).

Residues 1-44 constitute a mitochondrion transit peptide; the sequence is MIVRNLLGKNRLCCLQPKLLLSTLSQRPQLQLSLQLLCRATRLY. A tr-type G domain is found at 53-340; that stretch reads PKTRNIGIIA…GITNYLPSPL (288 aa). GTP is bound by residues 62-69, 126-130, and 180-183; these read AHIDAGKT, DTPGH, and NKMD.

It belongs to the TRAFAC class translation factor GTPase superfamily. Classic translation factor GTPase family. EF-G/EF-2 subfamily.

It is found in the mitochondrion. In terms of biological role, mitochondrial GTPase that mediates the disassembly of ribosomes from messenger RNA at the termination of mitochondrial protein biosynthesis. Not involved in the GTP-dependent ribosomal translocation step during translation elongation. The polypeptide is Ribosome-releasing factor 2, mitochondrial (Lodderomyces elongisporus (strain ATCC 11503 / CBS 2605 / JCM 1781 / NBRC 1676 / NRRL YB-4239) (Yeast)).